The following is a 164-amino-acid chain: Serine/arginine-rich splicing factor 3 (164 aa).

Residue methionine 1 is modified to N-acetylmethionine. Positions 1–90 (MHRDSCPLDC…SNGEKRSRNR (90 aa)) are sufficient for interaction with NXF1 and SRSP. Serine 5 bears the Phosphoserine mark. In terms of domain architecture, RRM spans 10–83 (CKVYVGNLGN…CRVRVELSNG (74 aa)). Lysine 23 is modified (N6-acetyllysine). The interval 81–164 (SNGEKRSRNR…RSRSRSNERK (84 aa)) is disordered. Residues 107–128 (RSPPPRRRSPRRRSFSRSRSRS) show a composition bias toward basic residues. The B-1 repeat unit spans residues 119-133 (RSFSRSRSRSLSRDR). The segment at 119–164 (RSFSRSRSRSLSRDRRRERSLSRERNHKPSRSFSRSRSRSRSNERK) is 2 X approximate repeats, basic. Positions 129-142 (LSRDRRRERSLSRE) are enriched in basic and acidic residues. Over residues 143–158 (RNHKPSRSFSRSRSRS) the composition is skewed to basic residues. The B-2 repeat unit spans residues 149–164 (RSFSRSRSRSRSNERK).

This sequence belongs to the splicing factor SR family. As to quaternary structure, interacts with CPSF6. Interacts with RBMY1A1. Interacts with SREK1/SFRS12. Interacts with NXF1. Interacts with YTHDC1, leading to recruitment to RNA elements adjacent to m6A sites. Interacts with SRSP; increases SRSF3 binding to specific exons. In terms of processing, phosphorylated by CLK1, CLK2, CLK3 and CLK4. Extensively phosphorylated on serine residues in the RS domain.

Its subcellular location is the nucleus. It localises to the nucleus speckle. The protein resides in the cytoplasm. Splicing factor, which binds the consensus motif 5'-C[ACU][AU]C[ACU][AC]C-3' within pre-mRNA and promotes specific exons inclusion during alternative splicing. Interaction with YTHDC1, a RNA-binding protein that recognizes and binds N6-methyladenosine (m6A)-containing RNAs, promotes recruitment of SRSF3 to its mRNA-binding elements adjacent to m6A sites within exons. Also functions as an adapter involved in mRNA nuclear export. Binds mRNA which is thought to be transferred to the NXF1-NXT1 heterodimer for export (TAP/NXF1 pathway); enhances NXF1-NXT1 RNA-binding activity. Involved in nuclear export of m6A-containing mRNAs via interaction with YTHDC1: interaction with YTHDC1 facilitates m6A-containing mRNA-binding to both SRSF3 and NXF1, promoting mRNA nuclear export. The protein is Serine/arginine-rich splicing factor 3 (SRSF3) of Bos taurus (Bovine).